The chain runs to 476 residues: Glutamyl-tRNA(Gln) amidotransferase subunit A (476 aa).

Catalysis depends on charge relay system residues K76 and S151. S175 serves as the catalytic Acyl-ester intermediate.

The protein belongs to the amidase family. GatA subfamily. In terms of assembly, heterotrimer of A, B and C subunits.

It catalyses the reaction L-glutamyl-tRNA(Gln) + L-glutamine + ATP + H2O = L-glutaminyl-tRNA(Gln) + L-glutamate + ADP + phosphate + H(+). In terms of biological role, allows the formation of correctly charged Gln-tRNA(Gln) through the transamidation of misacylated Glu-tRNA(Gln) in organisms which lack glutaminyl-tRNA synthetase. The reaction takes place in the presence of glutamine and ATP through an activated gamma-phospho-Glu-tRNA(Gln). This chain is Glutamyl-tRNA(Gln) amidotransferase subunit A, found in Chlorobium phaeobacteroides (strain DSM 266 / SMG 266 / 2430).